The chain runs to 246 residues: Small ribosomal subunit protein uS3 (246 aa).

The region spanning Leu23 to Ala94 is the KH type-2 domain. The interval Gly201–Leu246 is disordered. Composition is skewed to basic and acidic residues over residues Glu214–Tyr228 and Pro236–Leu246. Phosphothreonine is present on residues Thr223 and Thr226. Ser241 is modified (phosphoserine).

This sequence belongs to the universal ribosomal protein uS3 family. Interacts with LTV1; the interaction is RNA-independent.

It is found in the cytoplasm. Its subcellular location is the nucleus. Has DNA repair activity directed towards the mutagenic lesions 8-oxoguanine and abasic sites in DNA. It can cleave DNA containing 8-oxoguanine residues efficiently. Also acts as an ap lyase, cleaving phosphodiester bonds via a beta,delta elimination reaction. In Drosophila melanogaster (Fruit fly), this protein is Small ribosomal subunit protein uS3 (RpS3).